The sequence spans 93 residues: UPF0473 protein RBAM_024480 (93 aa).

Belongs to the UPF0473 family.

The polypeptide is UPF0473 protein RBAM_024480 (Bacillus velezensis (strain DSM 23117 / BGSC 10A6 / LMG 26770 / FZB42) (Bacillus amyloliquefaciens subsp. plantarum)).